The following is a 127-amino-acid chain: Translation initiation factor 5A (127 aa).

A Hypusine modification is found at K35.

Belongs to the eIF-5A family.

Its subcellular location is the cytoplasm. Functionally, functions by promoting the formation of the first peptide bond. The protein is Translation initiation factor 5A of Methanococcoides burtonii (strain DSM 6242 / NBRC 107633 / OCM 468 / ACE-M).